The sequence spans 190 residues: MLPDIGGTELLVIAAVALIVVGPKDLPVLLRKLGQFIGKIRGMANEFRASFDEMARQSELDELRKEVQAMRDGQYTAPMRDAAAQAGDASHVDQVFADIDASLNSGAVKVSPFEAYQAPALEAPEPTVEIVSKPARKPPAKKAAAKPAAKAELVSKPKASAKASKGDLSVPTKPARKRAAKASTNSDITS.

The chain crosses the membrane as a helical span at residues 2–22 (LPDIGGTELLVIAAVALIVVG). A disordered region spans residues 130–190 (IVSKPARKPP…KASTNSDITS (61 aa)). The span at 134 to 144 (PARKPPAKKAA) shows a compositional bias: basic residues. Low complexity predominate over residues 145 to 163 (AKPAAKAELVSKPKASAKA).

It belongs to the TatB family. In terms of assembly, the Tat system comprises two distinct complexes: a TatABC complex, containing multiple copies of TatA, TatB and TatC subunits, and a separate TatA complex, containing only TatA subunits. Substrates initially bind to the TatABC complex, which probably triggers association of the separate TatA complex to form the active translocon.

The protein localises to the cell inner membrane. Its function is as follows. Part of the twin-arginine translocation (Tat) system that transports large folded proteins containing a characteristic twin-arginine motif in their signal peptide across membranes. Together with TatC, TatB is part of a receptor directly interacting with Tat signal peptides. TatB may form an oligomeric binding site that transiently accommodates folded Tat precursor proteins before their translocation. This is Sec-independent protein translocase protein TatB from Caulobacter sp. (strain K31).